We begin with the raw amino-acid sequence, 112 residues long: Transcriptional regulator ClgR (112 aa).

Residues 13-67 form the HTH cro/C1-type domain; the sequence is LRGARMSQGRTLREVSDSARVSLGYLSEIERGRKEPSSELLSAICTALQLPLSVV. The segment at residues 24-43 is a DNA-binding region (H-T-H motif); sequence LREVSDSARVSLGYLSEIER.

Key stress-response regulator that plays an important role in multiple regulatory networks in response to different stress conditions. Required to manage host-derived stress during infection. Plays a role during hypoxia and reaeration. Controls the expression of many genes involved in heat shock, virulence, lipid metabolism, transport or regulation, including clpP1, clpP2, clpC1, hsp, groES, otsA, pknD, prcA and prcB. May function by protecting intracellular redox potential and by inducing the expression of trehalose, a constituent of cell walls that is important for defense against cell-surface and oxidative stress. Also performs different functions during stress response and is important for the pathogenicity of M.tuberculosis in vivo, regardless of the induction of the Clp proteolytic pathway. May directly activate SigE and/or SigH. The chain is Transcriptional regulator ClgR (clgR) from Mycobacterium tuberculosis (strain CDC 1551 / Oshkosh).